The primary structure comprises 147 residues: Large ribosomal subunit protein bL9 (147 aa).

It belongs to the bacterial ribosomal protein bL9 family.

Binds to the 23S rRNA. The chain is Large ribosomal subunit protein bL9 from Campylobacter jejuni subsp. jejuni serotype O:23/36 (strain 81-176).